We begin with the raw amino-acid sequence, 386 residues long: MSDVSGKVNLLNFDHKSMREYLESIGEKPFRADQIMKWIYHFGYSDFEQMTNINKKLREKLQRNCIISAPDISEKQVSEDGTIKYALKLEGGQEVETVWIPENDRATLCVSSQVGCALECTFCATAQQGFNRNLSMAEIIGQVWRVANDIGATRIAGTRPITNIVMMGMGEPLLNMKNLIPALDTMLNDLGYGLSKRRVTVSTSGVVPALDMLKAKIDCALAISIHAPNNKLRDELVPINKKYPLEDFIAAAGRYIEGSKANKQATIEYVMLDHVNDSTDQAHELAHALKGLPSKINLIPFNPYPGSPYSRSSNSRIDRFDKVLQSYGLTVITRRTRGEDIDAACGQLAGDVFDRTKRSVINAAKNAEISSLKNQPKADTISIKVV.

Glutamate 96 (proton acceptor) is an active-site residue. The region spanning 102–340 (ENDRATLCVS…VITRRTRGED (239 aa)) is the Radical SAM core domain. A disulfide bond links cysteine 109 and cysteine 345. Residues cysteine 116, cysteine 120, and cysteine 123 each contribute to the [4Fe-4S] cluster site. S-adenosyl-L-methionine-binding positions include 170–171 (GE), serine 202, 224–226 (SIH), and asparagine 302. Catalysis depends on cysteine 345, which acts as the S-methylcysteine intermediate.

It belongs to the radical SAM superfamily. RlmN family. [4Fe-4S] cluster is required as a cofactor.

It localises to the cytoplasm. The catalysed reaction is adenosine(2503) in 23S rRNA + 2 reduced [2Fe-2S]-[ferredoxin] + 2 S-adenosyl-L-methionine = 2-methyladenosine(2503) in 23S rRNA + 5'-deoxyadenosine + L-methionine + 2 oxidized [2Fe-2S]-[ferredoxin] + S-adenosyl-L-homocysteine. The enzyme catalyses adenosine(37) in tRNA + 2 reduced [2Fe-2S]-[ferredoxin] + 2 S-adenosyl-L-methionine = 2-methyladenosine(37) in tRNA + 5'-deoxyadenosine + L-methionine + 2 oxidized [2Fe-2S]-[ferredoxin] + S-adenosyl-L-homocysteine. Specifically methylates position 2 of adenine 2503 in 23S rRNA and position 2 of adenine 37 in tRNAs. m2A2503 modification seems to play a crucial role in the proofreading step occurring at the peptidyl transferase center and thus would serve to optimize ribosomal fidelity. This is Dual-specificity RNA methyltransferase RlmN from Colwellia psychrerythraea (strain 34H / ATCC BAA-681) (Vibrio psychroerythus).